A 403-amino-acid chain; its full sequence is FAD-dependent monooxygenase tazP (403 aa).

FAD-binding residues include G75, R144, D354, and A367.

Belongs to the paxM FAD-dependent monooxygenase family. FAD is required as a cofactor.

The protein operates within secondary metabolite biosynthesis. In terms of biological role, FAD-dependent monooxygenase; part of the gene cluster that mediates the biosynthesis of azaterrilone A and other azaphilones, a class of fungal metabolites characterized by a highly oxygenated pyrano-quinone bicyclic core and exhibiting a broad range of bioactivities. The first step of the pathway begins with the non-reducing polyketide synthase tazA that assembles one acetyl-CoA starter unit, five malonyl-CoA units, and catalyzes a series of Claisen condensations, methylation, PT-mediated cyclization, and finally releases the first hexaketide precursor through the R-domain. The tazA product then undergoes reduction on its terminal ketone and the following pyran-ring formation by yet undetermined enzyme(s). Dehydration and enoyl reduction, possibly involving the trans-enoyl reductase tazE leads to the next intermediate. TazD is predicted as an acetyltransferase and might catalyze the acetylation steps leading to the synthesis of azaterrilone A. Azaterrilone A is not the final product of the taz pathway and both the highly reducing polyketide synthase tazB and the dual enzyme tazHJ catalyze late steps of the pathway, leading to the production of the 2 final stereoisomers that contain additional polyketide modification whose structures have still to be determined. This is FAD-dependent monooxygenase tazP from Aspergillus terreus (strain NIH 2624 / FGSC A1156).